The chain runs to 287 residues: Ribosomal RNA small subunit methyltransferase A (287 aa).

Residues Asn-28, Leu-30, Gly-55, Glu-76, Asp-101, and Asn-125 each coordinate S-adenosyl-L-methionine.

The protein belongs to the class I-like SAM-binding methyltransferase superfamily. rRNA adenine N(6)-methyltransferase family. RsmA subfamily.

The protein resides in the cytoplasm. It carries out the reaction adenosine(1518)/adenosine(1519) in 16S rRNA + 4 S-adenosyl-L-methionine = N(6)-dimethyladenosine(1518)/N(6)-dimethyladenosine(1519) in 16S rRNA + 4 S-adenosyl-L-homocysteine + 4 H(+). Its function is as follows. Specifically dimethylates two adjacent adenosines (A1518 and A1519) in the loop of a conserved hairpin near the 3'-end of 16S rRNA in the 30S particle. May play a critical role in biogenesis of 30S subunits. The polypeptide is Ribosomal RNA small subunit methyltransferase A (Alkaliphilus metalliredigens (strain QYMF)).